The chain runs to 127 residues: Oleate-induced peroxisomal protein POX18 (127 aa).

An SCP2 domain is found at 14–119; sequence FKELHEGLAD…KATAIESVFK (106 aa). The hydrophobic stretch occupies residues 33–41; the sequence is AVNAVIVIT. The segment at 43–52 is hydrophilic; it reads KNKEGKEQSW.

In terms of assembly, monomer.

It is found in the peroxisome. It functions in the pathway lipid metabolism; fatty acid metabolism. Functionally, is involved in beta-oxidation of long-chain fatty acids. Its exact function is unknown, but possesses a nonspecific lipid-transfer activity, despite the absence of a cysteine residue thought to be essential for the activity of its mammalian counterparts. The polypeptide is Oleate-induced peroxisomal protein POX18 (POX18) (Candida maltosa (Yeast)).